Reading from the N-terminus, the 98-residue chain is RING finger protein Z (98 aa).

A compositionally biased stretch (basic and acidic residues) spans 1 to 10 (MGNTKTKDRQ). Residues 1-26 (MGNTKTKDRQYQSNSSQPTNTSAPVL) are disordered. Glycine 2 is lipidated: N-myristoyl glycine; by host. The segment covering 11-23 (YQSNSSQPTNTSA) has biased composition (polar residues). An RING-type; atypical zinc finger spans residues 41 to 77 (CRCCWFADTNLVNCSNHYLCLKCLNTMLRRSNLCDIC). The PTAP/PSAP motif signature appears at 91–94 (PSAP).

It belongs to the arenaviridae Z protein family. As to quaternary structure, interacts with protein NP; this interaction probably directs the encapsidated genome to budding sites. Interacts (via RING domain) with polymerase L; this interaction inhibits viral transcription and replication, Z partially blocks the product exit tunnel for the releasing nascent RNA product. Interacts with the glycoprotein complex; this interaction plays a role in virion budding. Interacts with host eIF4E; this interaction results in eIF4E reduced affinity for its substrate, the 5'-m7 G cap structure. Interacts (via late-budding domain) with host TSG101; this interaction is essential for budding and release of viral particles. Interacts with host RPLP0; this interaction may serve to load ribosome-like particles inside the virion. Interacts with host PML; this interaction induces PML bodies redistribution in the cytoplasm upon viral infection. Myristoylation is required for the role of RING finger protein Z in assembly and budding.

The protein localises to the virion. The protein resides in the host cytoplasm. Its subcellular location is the host perinuclear region. It is found in the host cell membrane. Plays a crucial role in virion assembly and budding. Expressed late in the virus life cycle, it acts as an inhibitor of viral transcription and RNA synthesis by interacting with the viral polymerase L. Presumably recruits the NP encapsidated genome to cellular membranes at budding sites via direct interaction with NP. Plays critical roles in the final steps of viral release by interacting with host TSG101, a member of the vacuolar protein-sorting pathway and using other cellular host proteins involved in vesicle formation pathway. The budding of the virus progeny occurs after association of protein Z with the viral glycoprotein complex SSP-GP1-GP2 at the cell periphery, step that requires myristoylation of protein Z. Also selectively represses protein production by associating with host eIF4E. In cell-based minigenome assay, has an inhibitory effect on the ribonucleoprotein machinery (vRNP), which is responsible for the replication and transcription of the viral genome. This chain is RING finger protein Z, found in Chapare mammarenavirus (isolate Human/Bolivia/810419/2003).